The primary structure comprises 224 residues: Protein DCL, chloroplastic (224 aa).

The transit peptide at 1–50 directs the protein to the chloroplast; that stretch reads MASICTSNFHFLCRKNNSSPISHHLLLSPSSLSFSRCGGLRLCRCAAVKT. The interval 76 to 98 is disordered; it reads TTSESEELVKEESDDEVGKKSGD. A compositionally biased stretch (basic and acidic residues) spans 82 to 98; that stretch reads ELVKEESDDEVGKKSGD.

It localises to the plastid. It is found in the chloroplast. Its function is as follows. Has a function in the early stage of chloroplast development and palisade cell morphogenesis. Required for correct plastid ribosome assembly. Required for processing and maturation of 4.5S rRNA. In Solanum lycopersicum (Tomato), this protein is Protein DCL, chloroplastic (DCL).